The chain runs to 335 residues: Acetyl-coenzyme A carboxylase carboxyl transferase subunit alpha (335 aa).

Residues 48 to 308 enclose the CoA carboxyltransferase C-terminal domain; sequence TLELKVDALR…KEILIEELKA (261 aa).

Belongs to the AccA family. In terms of assembly, acetyl-CoA carboxylase is a heterohexamer composed of biotin carboxyl carrier protein (AccB), biotin carboxylase (AccC) and two subunits each of ACCase subunit alpha (AccA) and ACCase subunit beta (AccD).

It localises to the cytoplasm. It catalyses the reaction N(6)-carboxybiotinyl-L-lysyl-[protein] + acetyl-CoA = N(6)-biotinyl-L-lysyl-[protein] + malonyl-CoA. Its pathway is lipid metabolism; malonyl-CoA biosynthesis; malonyl-CoA from acetyl-CoA: step 1/1. Component of the acetyl coenzyme A carboxylase (ACC) complex. First, biotin carboxylase catalyzes the carboxylation of biotin on its carrier protein (BCCP) and then the CO(2) group is transferred by the carboxyltransferase to acetyl-CoA to form malonyl-CoA. The polypeptide is Acetyl-coenzyme A carboxylase carboxyl transferase subunit alpha (Pelodictyon phaeoclathratiforme (strain DSM 5477 / BU-1)).